We begin with the raw amino-acid sequence, 77 residues long: Large ribosomal subunit protein bL28 (77 aa).

This sequence belongs to the bacterial ribosomal protein bL28 family.

The sequence is that of Large ribosomal subunit protein bL28 from Ralstonia nicotianae (strain ATCC BAA-1114 / GMI1000) (Ralstonia solanacearum).